Reading from the N-terminus, the 452-residue chain is Exodeoxyribonuclease 7 large subunit (452 aa).

The protein belongs to the XseA family. As to quaternary structure, heterooligomer composed of large and small subunits.

It localises to the cytoplasm. It carries out the reaction Exonucleolytic cleavage in either 5'- to 3'- or 3'- to 5'-direction to yield nucleoside 5'-phosphates.. Functionally, bidirectionally degrades single-stranded DNA into large acid-insoluble oligonucleotides, which are then degraded further into small acid-soluble oligonucleotides. In Bacillus cereus (strain B4264), this protein is Exodeoxyribonuclease 7 large subunit.